The sequence spans 259 residues: DNA-directed RNA polymerase subunit Rpo3 (259 aa).

The protein belongs to the archaeal Rpo3/eukaryotic RPB3 RNA polymerase subunit family. As to quaternary structure, part of the RNA polymerase complex.

It is found in the cytoplasm. It carries out the reaction RNA(n) + a ribonucleoside 5'-triphosphate = RNA(n+1) + diphosphate. Functionally, DNA-dependent RNA polymerase (RNAP) catalyzes the transcription of DNA into RNA using the four ribonucleoside triphosphates as substrates. The protein is DNA-directed RNA polymerase subunit Rpo3 of Pyrobaculum arsenaticum (strain DSM 13514 / JCM 11321 / PZ6).